Reading from the N-terminus, the 314-residue chain is Small ribosomal subunit biogenesis GTPase RsgA (314 aa).

Residues 1-21 (MKRAPTKQPAKPAARGGERAQ) are disordered. The 162-residue stretch at 85–246 (SDQFKSKLFA…LIDSPGFQEF (162 aa)) folds into the CP-type G domain. GTP contacts are provided by residues 134–137 (NKID) and 188–196 (GQSGMGKST). Residues Cys-270, Cys-275, His-277, and Cys-283 each contribute to the Zn(2+) site.

The protein belongs to the TRAFAC class YlqF/YawG GTPase family. RsgA subfamily. In terms of assembly, monomer. Associates with 30S ribosomal subunit, binds 16S rRNA. It depends on Zn(2+) as a cofactor.

It is found in the cytoplasm. Functionally, one of several proteins that assist in the late maturation steps of the functional core of the 30S ribosomal subunit. Helps release RbfA from mature subunits. May play a role in the assembly of ribosomal proteins into the subunit. Circularly permuted GTPase that catalyzes slow GTP hydrolysis, GTPase activity is stimulated by the 30S ribosomal subunit. The protein is Small ribosomal subunit biogenesis GTPase RsgA of Burkholderia mallei (strain ATCC 23344).